A 743-amino-acid polypeptide reads, in one-letter code: Pentatricopeptide repeat-containing protein At2g16880 (743 aa).

PPR repeat units lie at residues 130 to 164 (SKAL…KLKP), 165 to 202 (NLLT…GVSL), 203 to 233 (NVQT…MVSE), 239 to 273 (DNVT…GLVP), 274 to 308 (NRVT…NVLP), 309 to 343 (DLCT…KLQP), 344 to 378 (DVVT…GVKA), 379 to 414 (NQVT…GFSP), 415 to 449 (DIVT…GIKM), 450 to 484 (NTIT…GFIV), 485 to 519 (DEVT…KITP), 520 to 554 (TVST…GLLP), 555 to 589 (DDST…SFKP), 590 to 620 (DNYT…LIEE), 624 to 658 (DTVT…GLEP), and 659 to 689 (DRFT…FSGK).

It belongs to the PPR family. P subfamily.

The chain is Pentatricopeptide repeat-containing protein At2g16880 from Arabidopsis thaliana (Mouse-ear cress).